Consider the following 513-residue polypeptide: Lysine--tRNA ligase (513 aa).

Positions 423 and 430 each coordinate Mg(2+).

Belongs to the class-II aminoacyl-tRNA synthetase family. As to quaternary structure, homodimer. Mg(2+) serves as cofactor.

It is found in the cytoplasm. The enzyme catalyses tRNA(Lys) + L-lysine + ATP = L-lysyl-tRNA(Lys) + AMP + diphosphate. This Anaeromyxobacter dehalogenans (strain 2CP-C) protein is Lysine--tRNA ligase.